Reading from the N-terminus, the 537-residue chain is Carboxypeptidase Y homolog A (537 aa).

Residues 1 to 17 form the signal peptide; the sequence is MRLSTSALVLGAASSAV. Residues 18–124 constitute a propeptide that is removed on maturation; the sequence is AFDQKVLGDL…RLDNYNLRAK (107 aa). 5 disulfides stabilise this stretch: C178-C418, C312-C326, C336-C359, C343-C352, and C381-C388. N209 carries N-linked (GlcNAc...) asparagine glycosylation. S265 is an active-site residue. Residue D457 is part of the active site. N503 is a glycosylation site (N-linked (GlcNAc...) asparagine). Residue H514 is part of the active site.

This sequence belongs to the peptidase S10 family.

The protein resides in the vacuole. It catalyses the reaction Release of a C-terminal amino acid with broad specificity.. Functionally, vacuolar carboxypeptidase involved in degradation of small peptides. Digests preferentially peptides containing an aliphatic or hydrophobic residue in P1' position, as well as methionine, leucine or phenylalanine in P1 position of ester substrate. The sequence is that of Carboxypeptidase Y homolog A (CPYA) from Fusarium vanettenii (strain ATCC MYA-4622 / CBS 123669 / FGSC 9596 / NRRL 45880 / 77-13-4) (Fusarium solani subsp. pisi).